Here is a 351-residue protein sequence, read N- to C-terminus: Succinylglutamate desuccinylase (351 aa).

H73, E76, and H168 together coordinate Zn(2+). E231 is an active-site residue.

This sequence belongs to the AspA/AstE family. Succinylglutamate desuccinylase subfamily. The cofactor is Zn(2+).

The enzyme catalyses N-succinyl-L-glutamate + H2O = L-glutamate + succinate. It participates in amino-acid degradation; L-arginine degradation via AST pathway; L-glutamate and succinate from L-arginine: step 5/5. Transforms N(2)-succinylglutamate into succinate and glutamate. The chain is Succinylglutamate desuccinylase from Burkholderia lata (strain ATCC 17760 / DSM 23089 / LMG 22485 / NCIMB 9086 / R18194 / 383).